Here is a 448-residue protein sequence, read N- to C-terminus: Elongation factor 1-alpha (448 aa).

In terms of domain architecture, tr-type G spans 5-230 (KIHISIVVIG…DQINEPKRPS (226 aa)). A G1 region spans residues 14-21 (GHVDSGKS). 14–21 (GHVDSGKS) is a binding site for GTP. An N6,N6-dimethyllysine modification is found at Lys-55. The segment at 70-74 (GITID) is G2. N6,N6,N6-trimethyllysine is present on Lys-79. Residues 91–94 (DAPG) form a G3 region. GTP-binding positions include 91 to 95 (DAPGH) and 153 to 156 (NKMD). The G4 stretch occupies residues 153 to 156 (NKMD). An N6,N6,N6-trimethyllysine modification is found at Lys-187. Positions 194-196 (SGF) are G5. Position 261 is an N6-methyllysine (Lys-261). The residue at position 289 (Glu-289) is a 5-glutamyl glycerylphosphorylethanolamine. Lys-306 bears the N6,N6,N6-trimethyllysine mark. Residue Glu-362 is modified to 5-glutamyl glycerylphosphorylethanolamine. Position 396 is an N6,N6,N6-trimethyllysine (Lys-396).

Belongs to the TRAFAC class translation factor GTPase superfamily. Classic translation factor GTPase family. EF-Tu/EF-1A subfamily.

The protein localises to the cytoplasm. Functionally, this protein promotes the GTP-dependent binding of aminoacyl-tRNA to the A-site of ribosomes during protein biosynthesis. In Solanum lycopersicum (Tomato), this protein is Elongation factor 1-alpha.